The sequence spans 264 residues: PDZ domain-containing protein 9 (264 aa).

In terms of domain architecture, PDZ spans 22-109 (VHNLSKTQQT…GTVLQIKVYR (88 aa)).

This Macaca fascicularis (Crab-eating macaque) protein is PDZ domain-containing protein 9 (PDZD9).